The sequence spans 804 residues: Probable basic-leucine zipper transcription factor C (804 aa).

Disordered regions lie at residues 86–148 (FISP…NDIN) and 275–371 (YGNV…PKKR). The span at 90 to 145 (NNNNNNNNNNNNNNNNNNNNNNNNNNNNNNNNNNNNNNNNNNNNNNNNNNNNNNNN) shows a compositional bias: low complexity. Residues 275 to 291 (YGNVSDNSSPETNFSYA) are compositionally biased toward polar residues. Low complexity predominate over residues 292 to 334 (SPSSPSSTQSQSSPYEQQPLSPNPTISLSSSISVTATTTTRPN). Over residues 335–356 (ATEKTKESSLKSKSKSNEKDKE) the composition is skewed to basic and acidic residues. Residues 415 to 478 (ALNYQFRKIK…DQYKLQEKQK (64 aa)) form the bZIP domain. The interval 421 to 436 (RKIKNRESARRSRERK) is basic motif. The tract at residues 443–450 (LEAKIAEI) is leucine-zipper. Residues 670–693 (KNCNNNNENNNNNDNNKNSDDEKG) form a disordered region. A compositionally biased stretch (low complexity) spans 672 to 685 (CNNNNENNNNNDNN).

Belongs to the bZIP family.

It is found in the nucleus. In terms of biological role, probable transcriptional regulator. The sequence is that of Probable basic-leucine zipper transcription factor C (bzpC) from Dictyostelium discoideum (Social amoeba).